Consider the following 349-residue polypeptide: Isopentenyl-diphosphate delta-isomerase (349 aa).

Arg-6–Lys-7 is a substrate binding site. FMN is bound by residues Ala-62 to Thr-64, Ser-93, and Asn-122. A substrate-binding site is contributed by Gln-152. Glu-153 is a Mg(2+) binding site. FMN is bound by residues Lys-184, Thr-214, Gly-258–Gly-259, and Ala-280–Gly-281.

It belongs to the IPP isomerase type 2 family. As to quaternary structure, homooctamer. Dimer of tetramers. FMN is required as a cofactor. It depends on NADPH as a cofactor. Requires Mg(2+) as cofactor.

The protein localises to the cytoplasm. It catalyses the reaction isopentenyl diphosphate = dimethylallyl diphosphate. Functionally, involved in the biosynthesis of isoprenoids. Catalyzes the 1,3-allylic rearrangement of the homoallylic substrate isopentenyl (IPP) to its allylic isomer, dimethylallyl diphosphate (DMAPP). The chain is Isopentenyl-diphosphate delta-isomerase from Bacillus cereus (strain 03BB102).